We begin with the raw amino-acid sequence, 292 residues long: 4-diphosphocytidyl-2-C-methyl-D-erythritol kinase (292 aa).

Residue lysine 20 is part of the active site. 103-113 serves as a coordination point for ATP; the sequence is PMGGGIGGGSS. The active site involves aspartate 145.

This sequence belongs to the GHMP kinase family. IspE subfamily.

The catalysed reaction is 4-CDP-2-C-methyl-D-erythritol + ATP = 4-CDP-2-C-methyl-D-erythritol 2-phosphate + ADP + H(+). The protein operates within isoprenoid biosynthesis; isopentenyl diphosphate biosynthesis via DXP pathway; isopentenyl diphosphate from 1-deoxy-D-xylulose 5-phosphate: step 3/6. Functionally, catalyzes the phosphorylation of the position 2 hydroxy group of 4-diphosphocytidyl-2C-methyl-D-erythritol. This Cupriavidus metallidurans (strain ATCC 43123 / DSM 2839 / NBRC 102507 / CH34) (Ralstonia metallidurans) protein is 4-diphosphocytidyl-2-C-methyl-D-erythritol kinase.